We begin with the raw amino-acid sequence, 149 residues long: MHCPFCAAVDTKVIDSRLVSDGSQVRRRRQCLDCNERFTTFEVAELVLPRVIKSDEVREPFNEEKLRRGMLKALEKRPVSSDDVETAISHIKSQLRATGEREVPTKMVGNLVMEALKRLDKVAYIRFASVYRSFEDVREFGEEIARLQD.

Residues 3–34 (CPFCAAVDTKVIDSRLVSDGSQVRRRRQCLDC) fold into a zinc finger. Residues 49-139 (PRVIKSDEVR…VYRSFEDVRE (91 aa)) form the ATP-cone domain.

This sequence belongs to the NrdR family. Requires Zn(2+) as cofactor.

In terms of biological role, negatively regulates transcription of bacterial ribonucleotide reductase nrd genes and operons by binding to NrdR-boxes. The polypeptide is Transcriptional repressor NrdR (Yersinia pseudotuberculosis serotype O:1b (strain IP 31758)).